The sequence spans 146 residues: uncharacterized protein (146 aa).

This is an uncharacterized protein from Escherichia coli (strain K12).